The chain runs to 303 residues: N-acetylmuramic acid 6-phosphate etherase (303 aa).

Residues 1 to 21 form a disordered region; the sequence is MQPSQLRSLTTESRNPNTMGI. The region spanning 58–221 is the SIS domain; sequence AYDSISNGGR…STSVMIRQGK (164 aa). Catalysis depends on Glu86, which acts as the Proton donor. Glu117 is an active-site residue.

This sequence belongs to the GCKR-like family. MurNAc-6-P etherase subfamily. In terms of assembly, homodimer.

It catalyses the reaction N-acetyl-D-muramate 6-phosphate + H2O = N-acetyl-D-glucosamine 6-phosphate + (R)-lactate. Its pathway is amino-sugar metabolism; N-acetylmuramate degradation. Its function is as follows. Specifically catalyzes the cleavage of the D-lactyl ether substituent of MurNAc 6-phosphate, producing GlcNAc 6-phosphate and D-lactate. This is N-acetylmuramic acid 6-phosphate etherase from Bacillus pumilus (strain SAFR-032).